Consider the following 284-residue polypeptide: Small ribosomal subunit protein uS5 (284 aa).

Positions 1–10 are enriched in basic and acidic residues; that stretch reads MMADEKKTPE. A disordered region spans residues 1 to 105; it reads MMADEKKTPE…DNRRGGRREE (105 aa). Over residues 14-23 the composition is skewed to low complexity; it reads ETATPAVAVE. Positions 24-43 are enriched in basic and acidic residues; sequence DALKAEPTETLEAQKAKAEA. Residues 44-67 show a composition bias toward low complexity; that stretch reads ETPAVAETPSEAAANQSAAQGAEG. Positions 68-105 are enriched in basic and acidic residues; that stretch reads QPRERGGHDRGGRGGRGGNDRGRGRGGRDNRRGGRREE. The S5 DRBM domain occupies 110 to 173; that stretch reads IIEKLVHINR…AAARKKMIRV (64 aa). The segment at 246-284 is disordered; the sequence is DQTSPKSVAQRRGKKVADLLGRGGASEAEAEADAAAIAE.

It belongs to the universal ribosomal protein uS5 family. In terms of assembly, part of the 30S ribosomal subunit. Contacts proteins S4 and S8.

Its function is as follows. With S4 and S12 plays an important role in translational accuracy. Functionally, located at the back of the 30S subunit body where it stabilizes the conformation of the head with respect to the body. This is Small ribosomal subunit protein uS5 from Erythrobacter litoralis (strain HTCC2594).